Consider the following 408-residue polypeptide: 1-deoxy-D-xylulose 5-phosphate reductoisomerase (408 aa).

NADPH-binding residues include Thr-27, Gly-28, Ser-29, Ile-30, Ala-53, Arg-54, Asn-55, and Asn-140. Lys-141 is a binding site for 1-deoxy-D-xylulose 5-phosphate. Position 142 (Glu-142) interacts with NADPH. Asp-166 contributes to the Mn(2+) binding site. 4 residues coordinate 1-deoxy-D-xylulose 5-phosphate: Ser-167, Glu-168, Ser-192, and His-215. Mn(2+) is bound at residue Glu-168. Residue Gly-221 coordinates NADPH. Residues Ser-228, Asn-233, Lys-234, and Glu-237 each contribute to the 1-deoxy-D-xylulose 5-phosphate site. Residue Glu-237 coordinates Mn(2+).

The protein belongs to the DXR family. The cofactor is Mg(2+). Mn(2+) serves as cofactor.

The catalysed reaction is 2-C-methyl-D-erythritol 4-phosphate + NADP(+) = 1-deoxy-D-xylulose 5-phosphate + NADPH + H(+). It functions in the pathway isoprenoid biosynthesis; isopentenyl diphosphate biosynthesis via DXP pathway; isopentenyl diphosphate from 1-deoxy-D-xylulose 5-phosphate: step 1/6. Functionally, catalyzes the NADPH-dependent rearrangement and reduction of 1-deoxy-D-xylulose-5-phosphate (DXP) to 2-C-methyl-D-erythritol 4-phosphate (MEP). The chain is 1-deoxy-D-xylulose 5-phosphate reductoisomerase from Nitratidesulfovibrio vulgaris (strain DP4) (Desulfovibrio vulgaris).